The primary structure comprises 356 residues: UDP-N-acetylglucosamine--N-acetylmuramyl-(pentapeptide) pyrophosphoryl-undecaprenol N-acetylglucosamine transferase (356 aa).

Residues 11–13, asparagine 123, arginine 159, serine 187, isoleucine 241, 260–265, and glutamine 286 contribute to the UDP-N-acetyl-alpha-D-glucosamine site; these read TGG and ALTVAE.

This sequence belongs to the glycosyltransferase 28 family. MurG subfamily.

The protein resides in the cell inner membrane. It carries out the reaction di-trans,octa-cis-undecaprenyl diphospho-N-acetyl-alpha-D-muramoyl-L-alanyl-D-glutamyl-meso-2,6-diaminopimeloyl-D-alanyl-D-alanine + UDP-N-acetyl-alpha-D-glucosamine = di-trans,octa-cis-undecaprenyl diphospho-[N-acetyl-alpha-D-glucosaminyl-(1-&gt;4)]-N-acetyl-alpha-D-muramoyl-L-alanyl-D-glutamyl-meso-2,6-diaminopimeloyl-D-alanyl-D-alanine + UDP + H(+). Its pathway is cell wall biogenesis; peptidoglycan biosynthesis. Its function is as follows. Cell wall formation. Catalyzes the transfer of a GlcNAc subunit on undecaprenyl-pyrophosphoryl-MurNAc-pentapeptide (lipid intermediate I) to form undecaprenyl-pyrophosphoryl-MurNAc-(pentapeptide)GlcNAc (lipid intermediate II). In Azoarcus sp. (strain BH72), this protein is UDP-N-acetylglucosamine--N-acetylmuramyl-(pentapeptide) pyrophosphoryl-undecaprenol N-acetylglucosamine transferase.